The sequence spans 202 residues: Small ribosomal subunit protein uS5 (202 aa).

An S5 DRBM domain is found at 50 to 113 (LKQELLNLNL…REAKLNITPV (64 aa)).

It belongs to the universal ribosomal protein uS5 family. As to quaternary structure, part of the 30S ribosomal subunit. Contacts protein S4.

Functionally, with S4 and S12 plays an important role in translational accuracy. The chain is Small ribosomal subunit protein uS5 from Pyrobaculum calidifontis (strain DSM 21063 / JCM 11548 / VA1).